Consider the following 289-residue polypeptide: Bifunctional protein FolD (289 aa).

Residues 165–167 and Ser190 contribute to the NADP(+) site; that span reads GAS.

It belongs to the tetrahydrofolate dehydrogenase/cyclohydrolase family. Homodimer.

The enzyme catalyses (6R)-5,10-methylene-5,6,7,8-tetrahydrofolate + NADP(+) = (6R)-5,10-methenyltetrahydrofolate + NADPH. It carries out the reaction (6R)-5,10-methenyltetrahydrofolate + H2O = (6R)-10-formyltetrahydrofolate + H(+). It functions in the pathway one-carbon metabolism; tetrahydrofolate interconversion. In terms of biological role, catalyzes the oxidation of 5,10-methylenetetrahydrofolate to 5,10-methenyltetrahydrofolate and then the hydrolysis of 5,10-methenyltetrahydrofolate to 10-formyltetrahydrofolate. The polypeptide is Bifunctional protein FolD (Ralstonia nicotianae (strain ATCC BAA-1114 / GMI1000) (Ralstonia solanacearum)).